The sequence spans 130 residues: Small ribosomal subunit protein uS9 (130 aa).

It belongs to the universal ribosomal protein uS9 family.

In Ralstonia nicotianae (strain ATCC BAA-1114 / GMI1000) (Ralstonia solanacearum), this protein is Small ribosomal subunit protein uS9.